Reading from the N-terminus, the 935-residue chain is DNA repair protein rev1 (935 aa).

The region spanning serine 59 to threonine 147 is the BRCT domain. Positions serine 162–serine 178 are enriched in polar residues. Residues serine 162–serine 193 are disordered. Basic and acidic residues predominate over residues aspartate 184 to serine 193. The interaction with target DNA stretch occupies residues phenylalanine 235 to serine 245. DCTP-binding positions include arginine 240 and aspartate 283–phenylalanine 287. The 182-residue stretch at leucine 279–glycine 460 folds into the UmuC domain. Residues aspartate 283 and phenylalanine 284 each coordinate Mg(2+). Positions isoleucine 310–asparagine 312 are interaction with target DNA. Residues serine 317 to arginine 323, asparagine 329, and aspartate 378 each bind dCTP. Mg(2+)-binding residues include aspartate 378 and glutamate 379. 2 interaction with target DNA regions span residues glycine 460–glutamine 463 and arginine 517–asparagine 525.

Belongs to the DNA polymerase type-Y family. Mg(2+) serves as cofactor.

It localises to the nucleus. Its subcellular location is the nucleolus. It is found in the mitochondrion. The protein resides in the cytoplasm. The protein localises to the cytoskeleton. It localises to the spindle. Functionally, deoxycytidyl transferase involved in DNA repair. Transfers a dCMP residue from dCTP to the 3'-end of a DNA primer in a template-dependent reaction. May assist in the first step in the bypass of abasic lesions by the insertion of a nucleotide opposite the lesion. Required for normal induction of mutations by physical and chemical agents. Involved in mitochondrial DNA mutagenesis. This Schizosaccharomyces pombe (strain 972 / ATCC 24843) (Fission yeast) protein is DNA repair protein rev1.